The chain runs to 49 residues: Protein 19.5 (49 aa).

Positions 1 to 23 are cleaved as a signal peptide; it reads MFRLLLNLLRHRVTYRFLVVLCA.

The chain is Protein 19.5 from Escherichia phage T7 (Bacteriophage T7).